The chain runs to 134 residues: Profilin-2 (134 aa).

Cysteines 13 and 118 form a disulfide. The Involved in PIP2 interaction signature appears at 84-100; it reads AVIRGKKGSGGITIKKT. The residue at position 114 (Thr114) is a Phosphothreonine.

This sequence belongs to the profilin family. As to quaternary structure, occurs in many kinds of cells as a complex with monomeric actin in a 1:1 ratio. Phosphorylated by MAP kinases.

Its subcellular location is the cytoplasm. The protein localises to the cytoskeleton. Functionally, binds to actin and affects the structure of the cytoskeleton. At high concentrations, profilin prevents the polymerization of actin, whereas it enhances it at low concentrations. The sequence is that of Profilin-2 from Olea europaea (Common olive).